Here is a 606-residue protein sequence, read N- to C-terminus: MAHILGIDLGTTNSCMAVIEGGQPVVIPNAEGFRTTPSVVAFTKTGERLVGHAAKRQAITNPERTIISIKRDMGTNRRIKIDDKEYSPEEISAMILMKLKADAEAYLGEKITQAVITVPAYFTDSQRQATKNAGRIAGLEVLRIINEPTAAALAYGLDKEGHQKIMVYDLGGGTFDVSILEIGEGVIEVLATSGNNRLGGDDFDQRIIDYIADEFMKEHGIDLRKDKVALQRLKDAAERAKIELSSALQTTINLPFITADANGPKHIDMVLTRAKFEELIKDLVEKTREPVETALSDAKLTPEQIDKVILVGGSTRIPYVQEFVKKLTGKEPFKGINPDECVAIGAAIQAGVLGGQVKDILLLDVTPLSLGIETLGGVFTKIIERNTTIPTRKSQIFTTAADGQTQVEIHVLQGERPLAKDNKTLGRFILDGIPPAPRGVPQIEVTFDIDANGIVHVSAKDLGTGREQKITITSQTHLSEEEIQRAIKEAEMYAEQDRKRKELIETRNKADSIIYQTEKLLRDLGDKMTATEKEQIEAKLKALKDVMNGEDKERIERAIDELTKSFYDVSTRLYQQGYTQAGPQGGTNPGGQGGTDGNVNTDYKVY.

Residue Thr-174 is modified to Phosphothreonine; by autocatalysis. The interval 578 to 606 (YTQAGPQGGTNPGGQGGTDGNVNTDYKVY) is disordered. Residues 583–596 (PQGGTNPGGQGGTD) are compositionally biased toward gly residues.

Belongs to the heat shock protein 70 family.

Its function is as follows. Acts as a chaperone. The chain is Chaperone protein DnaK from Caldicellulosiruptor saccharolyticus (strain ATCC 43494 / DSM 8903 / Tp8T 6331).